The sequence spans 61 residues: Small ribosomal subunit protein uS14 (61 aa).

Residues Cys24, Cys27, Cys40, and Cys43 each coordinate Zn(2+).

This sequence belongs to the universal ribosomal protein uS14 family. Zinc-binding uS14 subfamily. In terms of assembly, part of the 30S ribosomal subunit. Contacts proteins S3 and S10. It depends on Zn(2+) as a cofactor.

In terms of biological role, binds 16S rRNA, required for the assembly of 30S particles and may also be responsible for determining the conformation of the 16S rRNA at the A site. The protein is Small ribosomal subunit protein uS14 of Anaeromyxobacter sp. (strain Fw109-5).